The chain runs to 701 residues: Serologically defined colon cancer antigen 8 homolog (701 aa).

Over residues 1–13 the composition is skewed to acidic residues; the sequence is MKPSLESDEEEEL. Disordered stretches follow at residues 1-67 and 84-114; these read MKPS…VQQS and ANIQSLSPSRRKLAAKRATDDGSSSQPGVHN. Residues 45–67 show a composition bias toward polar residues; it reads SEPNQQELLSSVQQNPCSPVQQS. Coiled coils occupy residues 119–173, 203–258, and 323–695; these read INNQ…LKEY, HKWR…AVAA, and QQVK…AGKR. Residues 364-387 are disordered; it reads LASEQDKISQAREAARSESKKERE.

It is found in the cytoplasm. The protein localises to the cytoskeleton. The protein resides in the microtubule organizing center. Its subcellular location is the centrosome. It localises to the centriole. It is found in the cilium basal body. The protein localises to the cell junction. Its function is as follows. Plays a role in the establishment of cell polarity and epithelial lumen formation. Also plays an essential role in ciliogenesis and subsequent Hedgehog signaling pathway that requires the presence of intact primary cilia for pathway activation. Mechanistically, interacts with and mediates RABEP2 centrosomal localization which is critical for ciliogenesis. The chain is Serologically defined colon cancer antigen 8 homolog (Sdccag8) from Danio rerio (Zebrafish).